Reading from the N-terminus, the 862-residue chain is Protein translocase subunit SecA (862 aa).

Residues glutamine 88, 106 to 110 (GEGKT), and aspartate 506 each bind ATP. Cysteine 839, cysteine 841, cysteine 850, and histidine 851 together coordinate Zn(2+).

Belongs to the SecA family. As to quaternary structure, monomer and homodimer. Part of the essential Sec protein translocation apparatus which comprises SecA, SecYEG and auxiliary proteins SecDF-YajC and YidC. Zn(2+) serves as cofactor.

The protein resides in the cell inner membrane. Its subcellular location is the cytoplasm. The catalysed reaction is ATP + H2O + cellular proteinSide 1 = ADP + phosphate + cellular proteinSide 2.. Its function is as follows. Part of the Sec protein translocase complex. Interacts with the SecYEG preprotein conducting channel. Has a central role in coupling the hydrolysis of ATP to the transfer of proteins into and across the cell membrane, serving as an ATP-driven molecular motor driving the stepwise translocation of polypeptide chains across the membrane. This Campylobacter jejuni subsp. jejuni serotype O:2 (strain ATCC 700819 / NCTC 11168) protein is Protein translocase subunit SecA.